A 147-amino-acid chain; its full sequence is MSNSIDQNTMRTILLNSVQGGDVDANGNLIAKVSLMKLFQQFGSDITFSRITLDGDTINLYILSTINWQPIDVGNGITLDLRQYAGTTVIKIPIKKKFLDDLTQIANLPIVGVEQVNVNNTTDVVIKINTGKKMTATTSSSPPTIDF.

This is an uncharacterized protein from Acidianus filamentous virus 2 (isolate Italy/Pozzuoli) (AFV-2).